Reading from the N-terminus, the 650-residue chain is Acetyl-coenzyme A synthetase (650 aa).

Residues arginine 191–arginine 194, threonine 311, and asparagine 335 contribute to the CoA site. Residues glycine 387 to proline 389, aspartate 411 to threonine 416, aspartate 500, and arginine 515 each bind ATP. Residue serine 523 participates in CoA binding. Residue arginine 526 participates in ATP binding. Valine 537, histidine 539, and valine 542 together coordinate Mg(2+). Arginine 584 contributes to the CoA binding site. N6-acetyllysine is present on lysine 609.

This sequence belongs to the ATP-dependent AMP-binding enzyme family. Mg(2+) is required as a cofactor. In terms of processing, acetylated. Deacetylation by the SIR2-homolog deacetylase activates the enzyme.

The enzyme catalyses acetate + ATP + CoA = acetyl-CoA + AMP + diphosphate. Catalyzes the conversion of acetate into acetyl-CoA (AcCoA), an essential intermediate at the junction of anabolic and catabolic pathways. AcsA undergoes a two-step reaction. In the first half reaction, AcsA combines acetate with ATP to form acetyl-adenylate (AcAMP) intermediate. In the second half reaction, it can then transfer the acetyl group from AcAMP to the sulfhydryl group of CoA, forming the product AcCoA. This Shewanella sp. (strain MR-4) protein is Acetyl-coenzyme A synthetase.